We begin with the raw amino-acid sequence, 123 residues long: WAP four-disulfide core domain protein 5 (123 aa).

Positions 1 to 24 (MRFWSLFLLVVLLAVGGQLPAASG) are cleaved as a signal peptide. WAP domains are found at residues 27–74 (KGER…VPRI) and 75–121 (LVKR…RDPA). Disulfide bonds link Cys-34–Cys-62, Cys-41–Cys-66, Cys-49–Cys-61, Cys-55–Cys-70, Cys-81–Cys-109, Cys-88–Cys-113, Cys-96–Cys-108, and Cys-102–Cys-117.

Its subcellular location is the secreted. Putative acid-stable proteinase inhibitor. The polypeptide is WAP four-disulfide core domain protein 5 (WFDC5) (Lemur catta (Ring-tailed lemur)).